Here is a 1035-residue protein sequence, read N- to C-terminus: GRB10-interacting GYF protein 1 (1035 aa).

Phosphoserine occurs at positions 24, 28, 137, and 157. Positions 105–422 are disordered; that stretch reads KGAGPPLAGT…AGPPGDLEDD (318 aa). 2 stretches are compositionally biased toward basic and acidic residues: residues 148 to 179 and 186 to 203; these read SPRE…RCGF and PRKE…SLRE. Position 230 is a phosphoserine (serine 230). Positions 239 to 267 are enriched in basic and acidic residues; the sequence is GWREHGERRRKFEFDLRGDRGGCGEEEGR. Acidic residues-rich tracts occupy residues 295–304 and 324–349; these read CLDDEDEEMG and PEEQ…EEGP. Serine 341 is subject to Phosphoserine. The segment covering 367 to 378 has biased composition (low complexity); the sequence is SSPSPLPTLGPL. Residues 388–401 are compositionally biased toward basic and acidic residues; the sequence is TAEKEPPAAEDDIR. Phosphoserine is present on serine 406. Low complexity predominate over residues 406–417; it reads SPGVGSSAGPPG. In terms of domain architecture, GYF spans 474–522; that stretch reads ARKWFYKDPQGEIQGPFTTQEMAEWFQAGYFSMSLLVKRGCDEGFQPLG. A phosphoserine mark is found at serine 538 and serine 638. 3 disordered regions span residues 621-640, 696-724, and 825-879; these read PPRG…LSVP, KREE…QEEE, and WGGP…RPIR. Residues 629 to 639 are compositionally biased toward polar residues; sequence LLPTMSRSLSV. The span at 696–722 shows a compositional bias: basic and acidic residues; that stretch reads KREEEERKRREEKRRQQQQEEQKRRQE. Positions 857–874 are enriched in low complexity; the sequence is LKNSRSSPSLSDSYSHLS. Residue serine 862 is modified to Phosphoserine.

It belongs to the GIGYF family. In terms of assembly, interacts with GRB10. This transient binding is increased under IGF1 stimulation and leads to recruitment of GIGYF1/GRB10 complex to IGF1 receptor. Interacts with DDX6.

Functionally, may act cooperatively with GRB10 to regulate tyrosine kinase receptor signaling. May increase IGF1 receptor phosphorylation under IGF1 stimulation as well as phosphorylation of IRS1 and SHC1. In Homo sapiens (Human), this protein is GRB10-interacting GYF protein 1 (GIGYF1).